A 259-amino-acid chain; its full sequence is Phosphatidate cytidylyltransferase (259 aa).

The next 7 membrane-spanning stretches (helical) occupy residues 31-51, 69-89, 103-123, 129-149, 170-190, 193-213, and 236-256; these read LVIFLPKSLFLLVILFLCFAI, PLVLLTYYFADPLVFPLIGLL, FFKSTFLLFYPALFLVYLIKI, YYLLIFIFGIWINDVFAYYIG, FLGGVLFGSLFFALTLPYGIL, FLLGTFVLTVGVAGDYFKSFI, and FDALVFSAPVFYLIMCAGELN.

This sequence belongs to the CDS family.

The protein localises to the cell membrane. The catalysed reaction is a 1,2-diacyl-sn-glycero-3-phosphate + CTP + H(+) = a CDP-1,2-diacyl-sn-glycerol + diphosphate. The protein operates within phospholipid metabolism; CDP-diacylglycerol biosynthesis; CDP-diacylglycerol from sn-glycerol 3-phosphate: step 3/3. The chain is Phosphatidate cytidylyltransferase (cdsA) from Aquifex aeolicus (strain VF5).